The chain runs to 624 residues: Ceramide transfer protein (624 aa).

The span at 1–11 shows a compositional bias: polar residues; it reads MSDNQSWNSSG. The segment at 1 to 24 is disordered; sequence MSDNQSWNSSGSEEDPETESGPPV. In terms of domain architecture, PH spans 23-117; sequence PVERCGVLSK…WVDAIEQHKT (95 aa). Residues Ser126, Ser132, and Ser135 each carry the phosphoserine modification. The interval 202–221 is disordered; sequence DDEDDFPTTRSDGDFLHNTN. A coiled-coil region spans residues 263-303; it reads IELMVKREESWQKRHDREVEKRRRVEEAYKNVMEELKKKPR. Phosphoserine is present on Ser315. The short motif at 321-327 is the FFAT element; the sequence is EFFDAVE. Residue Tyr372 is modified to Phosphotyrosine. Residues Ser373, Ser377, and Ser380 each carry the phosphoserine modification. Positions 389–618 constitute an START domain; that stretch reads DVHRFSSQVE…FTSYVQEKTA (230 aa). The an N-acylsphing-4-enine site is built by Glu472, Gln493, Asn530, and Tyr579.

Interacts with VAPA and VAPB. Interaction with VAPB is less efficient than with VAPA. Interacts (via FFAT motif) with MOSPD2 (via MSP domain). In terms of processing, phosphorylation on Ser-132 decreases the affinity toward phosphatidylinositol 4-phosphate at Golgi membranes and reduces ceramide transfer activity. Inactivated by hyperphosphorylation of serine residues by CSNK1G2/CK1 that triggers dissociation from the Golgi complex, thus down-regulating ER-to-Golgi transport of ceramide and sphingomyelin synthesis.

Its subcellular location is the cytoplasm. The protein resides in the golgi apparatus. The protein localises to the endoplasmic reticulum. It catalyses the reaction N-hexadecanoylsphing-4-enine(in) = N-hexadecanoylsphing-4-enine(out). Shelters ceramides and diacylglycerol lipids inside its START domain and mediates the intracellular trafficking of ceramides and diacylglycerol lipids in a non-vesicular manner. The protein is Ceramide transfer protein (Cert1) of Mus musculus (Mouse).